The primary structure comprises 407 residues: Cathepsin D (407 aa).

Residues 1 to 20 (MQTPGVLLLILGLLDASSSA) form the signal peptide. The propeptide at 21–64 (LIRIPLRKFTSIRRTMTEVGGSVEDLILKGPITKYSMQSSPRTK) is activation peptide. The region spanning 79 to 402 (YYGEIGIGTP…DREYNRVGFA (324 aa)) is the Peptidase A1 domain. 2 cysteine pairs are disulfide-bonded: C91/C160 and C110/C117. Residue D97 is part of the active site. N-linked (GlcNAc...) asparagine glycans are attached at residues N134 and N258. The cysteines at positions 281 and 285 are disulfide-linked. D290 is an active-site residue. Residues C324 and C361 are joined by a disulfide bond.

Belongs to the peptidase A1 family. In terms of assembly, occurs as a mixture of both a single chain form and two types of two chain (light and heavy) forms. Interacts with ADAM30; this leads to activation of CTSD. N- and O-glycosylated. Post-translationally, undergoes proteolytic cleavage and activation by ADAM30.

The protein localises to the lysosome. The protein resides in the melanosome. Its subcellular location is the secreted. It is found in the extracellular space. The enzyme catalyses Specificity similar to, but narrower than, that of pepsin A. Does not cleave the 4-Gln-|-His-5 bond in B chain of insulin.. In terms of biological role, acid protease active in intracellular protein breakdown. Plays a role in APP processing following cleavage and activation by ADAM30 which leads to APP degradation. This chain is Cathepsin D (Ctsd), found in Rattus norvegicus (Rat).